Consider the following 547-residue polypeptide: RNA polymerase sigma factor sigF, chloroplastic (547 aa).

A compositionally biased stretch (polar residues) spans 1–17; the sequence is MEATRNLVSSSPSFQTK. Disordered stretches follow at residues 1 to 28 and 54 to 79; these read MEAT…SSPS and FPAS…DDRT. A chloroplast-targeting transit peptide spans 1–55; it reads MEATRNLVSSSPSFQTKTHLKSSYSSPSSVVMLHDQTTTPVVNSRHLNSLSRHFP. Basic and acidic residues predominate over residues 62-79; it reads EPREESRPLSHALRDDRT. Residues serine 94, serine 95, serine 174, serine 176, serine 177, and serine 180 each carry the phosphoserine; by CK2 modification. Residues 163–226 form a disordered region; sequence ANPSDNIKDS…QKTSAKKKYK (64 aa). Positions 172 to 181 are enriched in low complexity; that stretch reads SLSTSSSMSL. Phosphothreonine; by CK2 is present on threonine 249. The short motif at 335–348 is the Polymerase core binding element; that stretch reads DLLQEGSMGLMKSV. Positions 505–524 form a DNA-binding region, H-T-H motif; that stretch reads LSEIGEIYGLSKERVRQLES.

This sequence belongs to the sigma-70 factor family. As to quaternary structure, interacts (via N-terminus) with DG1 (via C-terminus). Post-translationally, phosphorylated to acquire sigma activity; site-specific phosphorylation regulates promoter affinity. Phosphorylation at Ser-174 by chloroplastic CK2 requires prior phosphorylation at Ser-177. Phosphorylation at either Ser-94, Ser-95 or Ser-174 is required for sigma activation. Expressed in seedling, accumulating progressively. Present in leaves but not in roots.

The protein resides in the plastid. Its subcellular location is the chloroplast. Functionally, sigma factors are initiation factors that promote the attachment of plastid-encoded RNA polymerase (PEP) to specific initiation sites and are then released. Regulates transcription in chloroplast in a DG1-dependent manner. Involved in light-dependent chloroplast development. Required during early plant development and primary leaf formation. This Arabidopsis thaliana (Mouse-ear cress) protein is RNA polymerase sigma factor sigF, chloroplastic (SIGF).